The chain runs to 999 residues: Multiple C2 and transmembrane domain-containing protein 1 (999 aa).

A compositionally biased stretch (low complexity) spans 1-19 (MEPRAAAAGEPEPPAASSS). Residues 1–241 (MEPRAAAAGE…TGEEHGSSQK (241 aa)) are disordered. Positions 34–44 (RSKGGGGGRAG) are enriched in gly residues. Low complexity predominate over residues 65-79 (GNAPARGSGAGSRWS). Over residues 92 to 101 (FSSSQPNLCC) the composition is skewed to polar residues. Composition is skewed to low complexity over residues 131-141 (PAVKGPAAASG) and 149-169 (GGRS…LSSS). Composition is skewed to basic and acidic residues over residues 175–185 (RGDRARDEGAR) and 228–238 (RAPETGEEHGS). C2 domains lie at 242-360 (IINT…DVTL), 452-569 (QTQS…KLEL), and 603-724 (QKER…AYVL). Residues Asp277, Asp283, Asp330, Asp332, Asp338, Asp486, Asp492, Asp539, Asp541, Asp547, Asp642, Asp648, Asp694, Asp696, and Asp702 each coordinate Ca(2+). Transmembrane regions (helical) follow at residues 811–831 (FVLF…LVLL) and 914–934 (PFLS…LYCI).

Belongs to the MCTP family. Ca(2+) serves as cofactor.

The protein localises to the cytoplasmic vesicle. It is found in the secretory vesicle. The protein resides in the synaptic vesicle membrane. It localises to the recycling endosome. Its subcellular location is the endoplasmic reticulum membrane. Calcium sensor which is essential for the stabilization of normal baseline neurotransmitter release and for the induction and long-term maintenance of presynaptic homeostatic plasticity. This is Multiple C2 and transmembrane domain-containing protein 1 (MCTP1) from Homo sapiens (Human).